The following is a 257-amino-acid chain: Imidazole glycerol phosphate synthase subunit HisF (257 aa).

Active-site residues include aspartate 11 and aspartate 130.

This sequence belongs to the HisA/HisF family. Heterodimer of HisH and HisF.

The protein localises to the cytoplasm. The catalysed reaction is 5-[(5-phospho-1-deoxy-D-ribulos-1-ylimino)methylamino]-1-(5-phospho-beta-D-ribosyl)imidazole-4-carboxamide + L-glutamine = D-erythro-1-(imidazol-4-yl)glycerol 3-phosphate + 5-amino-1-(5-phospho-beta-D-ribosyl)imidazole-4-carboxamide + L-glutamate + H(+). Its pathway is amino-acid biosynthesis; L-histidine biosynthesis; L-histidine from 5-phospho-alpha-D-ribose 1-diphosphate: step 5/9. IGPS catalyzes the conversion of PRFAR and glutamine to IGP, AICAR and glutamate. The HisF subunit catalyzes the cyclization activity that produces IGP and AICAR from PRFAR using the ammonia provided by the HisH subunit. The sequence is that of Imidazole glycerol phosphate synthase subunit HisF from Psychromonas ingrahamii (strain DSM 17664 / CCUG 51855 / 37).